The following is a 580-amino-acid chain: Laccase-20 (580 aa).

The signal sequence occupies residues 1–23 (MVASLLCTVAVAVLAVAAVGGEA). Plastocyanin-like domains follow at residues 31–147 (VVHE…PRDG) and 156–310 (KDVP…YTGV). 2 N-linked (GlcNAc...) asparagine glycosylation sites follow: Asn-36 and Asn-42. Residues His-81 and His-83 each contribute to the Cu cation site. N-linked (GlcNAc...) asparagine glycosylation occurs at Asn-115. The Cu cation site is built by His-126 and His-128. Asn-200, Asn-339, Asn-373, Asn-392, Asn-399, Asn-429, and Asn-460 each carry an N-linked (GlcNAc...) asparagine glycan. A Plastocyanin-like 3 domain is found at 419 to 561 (DFPVRPPRPY…ATAFIVEDGP (143 aa)). Residues Asn-478, His-481, His-483, His-540, Cys-541, His-542, His-546, and Met-551 each contribute to the Cu cation site. The tract at residues 560 to 580 (GPTPETSLPPPPPEFKRCDAS) is disordered.

This sequence belongs to the multicopper oxidase family. The cofactor is Cu cation.

Its subcellular location is the secreted. The protein localises to the extracellular space. It is found in the apoplast. It catalyses the reaction 4 hydroquinone + O2 = 4 benzosemiquinone + 2 H2O. Functionally, lignin degradation and detoxification of lignin-derived products. The sequence is that of Laccase-20 (LAC20) from Oryza sativa subsp. japonica (Rice).